We begin with the raw amino-acid sequence, 659 residues long: Delta(6)-protoilludene synthase (659 aa).

4 residues coordinate Mg(2+): D91, N227, S231, and E235. Residues 91–95 (DEHTD) carry the DDXXD motif motif. Positions 316 and 317 each coordinate (2E,6E)-farnesyl diphosphate. Positions 528–586 (PQFSKTSGAPNGAHTPTTTNGSIKSNGFVSGDTNGHANGNGHVQTRSSTPSSSSSSTSS) are disordered. Over residues 530-573 (FSKTSGAPNGAHTPTTTNGSIKSNGFVSGDTNGHANGNGHVQTR) the composition is skewed to polar residues. Over residues 574–586 (SSTPSSSSSSTSS) the composition is skewed to low complexity.

This sequence belongs to the terpene synthase family. Mg(2+) is required as a cofactor.

It catalyses the reaction (2E,6E)-farnesyl diphosphate = Delta(6)-protoilludene + diphosphate. Functionally, terpene cyclase that catalyzes the cyclization of farnesyl diphosphate (FPP) to delta(6)-protoilludene. This Cyclocybe aegerita (Black poplar mushroom) protein is Delta(6)-protoilludene synthase.